The following is a 1798-amino-acid chain: U3 small nucleolar RNA-associated protein 10 (1798 aa).

The HEAT 1 repeat unit spans residues 583–620 (LDFQALLPFLLVTLTDPSERVRREAAAALAAVGSLYKK). A run of 2 helical transmembrane segments spans residues 942-962 (IQSG…AIVN) and 998-1018 (ALLL…HSVM). HEAT repeat units lie at residues 1042–1079 (QTID…AFEH), 1249–1286 (LTLV…QNPE), 1293–1331 (IRVL…KYGK), and 1754–1791 (ALLP…VLGE).

It belongs to the HEATR1/UTP10 family. Component of the ribosomal small subunit (SSU) processome.

Its subcellular location is the nucleus. It localises to the nucleolus. It is found in the membrane. Involved in nucleolar processing of pre-18S ribosomal RNA. Involved in ribosome biosynthesis. The polypeptide is U3 small nucleolar RNA-associated protein 10 (Aspergillus fumigatus (strain ATCC MYA-4609 / CBS 101355 / FGSC A1100 / Af293) (Neosartorya fumigata)).